Reading from the N-terminus, the 305-residue chain is UDP-3-O-acyl-N-acetylglucosamine deacetylase (305 aa).

3 residues coordinate Zn(2+): histidine 78, histidine 237, and aspartate 241. The active-site Proton donor is histidine 264.

It belongs to the LpxC family. Requires Zn(2+) as cofactor.

It catalyses the reaction a UDP-3-O-[(3R)-3-hydroxyacyl]-N-acetyl-alpha-D-glucosamine + H2O = a UDP-3-O-[(3R)-3-hydroxyacyl]-alpha-D-glucosamine + acetate. Its pathway is glycolipid biosynthesis; lipid IV(A) biosynthesis; lipid IV(A) from (3R)-3-hydroxytetradecanoyl-[acyl-carrier-protein] and UDP-N-acetyl-alpha-D-glucosamine: step 2/6. In terms of biological role, catalyzes the hydrolysis of UDP-3-O-myristoyl-N-acetylglucosamine to form UDP-3-O-myristoylglucosamine and acetate, the committed step in lipid A biosynthesis. The protein is UDP-3-O-acyl-N-acetylglucosamine deacetylase of Burkholderia cenocepacia (strain HI2424).